We begin with the raw amino-acid sequence, 101 residues long: MFVKKGDKVRVIAGKDKGTEAVVLKALPKVNKVVVEGVALIKKHQKPNNENPQGAIVEKEAPIHVSNVQVLDKNGVAGRVGYKVVDGKKVRYNKKSGEVLD.

The protein belongs to the universal ribosomal protein uL24 family. Part of the 50S ribosomal subunit.

Functionally, one of two assembly initiator proteins, it binds directly to the 5'-end of the 23S rRNA, where it nucleates assembly of the 50S subunit. In terms of biological role, one of the proteins that surrounds the polypeptide exit tunnel on the outside of the subunit. This is Large ribosomal subunit protein uL24 from Streptococcus agalactiae serotype III (strain NEM316).